The sequence spans 44 residues: Photosystem I reaction center subunit IX (44 aa).

The chain crosses the membrane as a helical span at residues Tyr7–Ile27.

The protein belongs to the PsaJ family.

The protein localises to the plastid. The protein resides in the chloroplast thylakoid membrane. In terms of biological role, may help in the organization of the PsaE and PsaF subunits. This Fagopyrum esculentum subsp. ancestrale (Wild buckwheat) protein is Photosystem I reaction center subunit IX.